Reading from the N-terminus, the 398-residue chain is uncharacterized protein (398 aa).

Belongs to the glycosyltransferase 2 family.

This is an uncharacterized protein from Escherichia coli (strain K12).